We begin with the raw amino-acid sequence, 267 residues long: MGYMVKLIYTQCKNCGYEWVVDQTIYYMKKYHDMVLTKTYFKPARFYVGDCNTIFNIAYDGIAWCDTPNNIVTKPSNSLKVITTSIWLKEHMEKKGIYVEQVIPRGINDEMAKKHVNFDFNARRGYVIIARNLPYKRIDNTLKMFEGKRKELTLISDHSNADFDFFSLSEDVKYYLLSHALFYIAVSDAEGFSIPPVEAMSVGTPLIYIKKHTYKEYGCGIEMDSIEDLRKIEISKEEWEDLSYKCWYKSLRYHYITVGQELWDWFK.

This sequence belongs to the glycosyltransferase group 1 family. Glycosyltransferase 4 subfamily.

This is Putative glycosyltransferase 63 (SIFV0063) from Sulfolobus islandicus filamentous virus (isolate Iceland/Hveragerdi) (SIFV).